Consider the following 287-residue polypeptide: Mitochondrial dicarboxylate carrier (287 aa).

Solcar repeat units follow at residues 7–87 (SRWY…MRDY), 100–187 (NKVL…AKQL), and 196–279 (DNIF…LRKH). A run of 3 helical transmembrane segments spans residues 9–29 (WYFG…LDLL), 62–81 (GLSA…FAIY), and 102–122 (VLLG…ADLV). The residue at position 158 (K158) is an N6-acetyllysine. Transmembrane regions (helical) follow at residues 162-181 (GATM…LSCY), 202-222 (FVSS…LDVL), and 254-274 (GLFP…MFLE).

The protein belongs to the mitochondrial carrier (TC 2.A.29) family. In terms of tissue distribution, expressed at very high levels in white adipose tissue. And at low levels in brown adipose tissue, kidney and liver.

It is found in the mitochondrion inner membrane. The enzyme catalyses (S)-malate(in) + phosphate(out) = (S)-malate(out) + phosphate(in). It catalyses the reaction malonate(out) + (S)-malate(in) = malonate(in) + (S)-malate(out). It carries out the reaction (S)-malate(in) + succinate(out) = (S)-malate(out) + succinate(in). The catalysed reaction is (S)-malate(in) + sulfate(out) = (S)-malate(out) + sulfate(in). The enzyme catalyses malonate(out) + phosphate(in) = malonate(in) + phosphate(out). It catalyses the reaction succinate(out) + phosphate(in) = succinate(in) + phosphate(out). It carries out the reaction sulfate(out) + phosphate(in) = sulfate(in) + phosphate(out). The catalysed reaction is malonate(out) + succinate(in) = malonate(in) + succinate(out). Regulated by circadian protein CLOCK (Circadian Locomotor Output Cycles Kaput). Catalyzes the electroneutral exchange or flux of physiologically important metabolites such as dicarboxylates (malonate, malate, succinate), inorganic sulfur-containing anions, and phosphate, across mitochondrial inner membrane. Plays an important role in gluconeogenesis, fatty acid metabolism, urea synthesis, and sulfur metabolism, particularly in liver, by supplying the substrates for the different metabolic processes. Regulates fatty acid release from adipocytes, and contributes to systemic insulin sensitivity. This chain is Mitochondrial dicarboxylate carrier, found in Mus musculus (Mouse).